A 79-amino-acid chain; its full sequence is Defensin-like protein 3 (79 aa).

An N-terminal signal peptide occupies residues 1-29 (MAKFASIITLLFAALVVFAAFEAPTMVEA). 4 disulfides stabilise this stretch: C32/C79, C43/C64, C49/C73, and C53/C75.

It belongs to the DEFL family.

The protein resides in the secreted. Possesses antifungal activity sensitive to inorganic cations. The protein is Defensin-like protein 3 (AFP3) of Brassica napus (Rape).